Consider the following 167-residue polypeptide: Lipoprotein signal peptidase (167 aa).

A run of 3 helical transmembrane segments spans residues 12–32 (WLWLAVLAFVLDQASKLAVVK), 68–88 (WQRWFFAVLAFAICGLLIHWL), and 99–119 (GIAYSLIIGGALGNVFDRLVL). Residues Asp-124 and Asp-142 contribute to the active site. Residues 137–157 (AFNLADSFIFIGAAMIVLDGF) traverse the membrane as a helical segment.

The protein belongs to the peptidase A8 family.

Its subcellular location is the cell inner membrane. It carries out the reaction Release of signal peptides from bacterial membrane prolipoproteins. Hydrolyzes -Xaa-Yaa-Zaa-|-(S,diacylglyceryl)Cys-, in which Xaa is hydrophobic (preferably Leu), and Yaa (Ala or Ser) and Zaa (Gly or Ala) have small, neutral side chains.. The protein operates within protein modification; lipoprotein biosynthesis (signal peptide cleavage). Its function is as follows. This protein specifically catalyzes the removal of signal peptides from prolipoproteins. This Aeromonas hydrophila subsp. hydrophila (strain ATCC 7966 / DSM 30187 / BCRC 13018 / CCUG 14551 / JCM 1027 / KCTC 2358 / NCIMB 9240 / NCTC 8049) protein is Lipoprotein signal peptidase.